Reading from the N-terminus, the 469-residue chain is Ectonucleoside triphosphate diphosphohydrolase 5 (469 aa).

A signal peptide spans 1-24; that stretch reads MATPWGAVFFLLMIACAGSTVFYR. Glutamate 172 acts as the Proton acceptor in catalysis. An N-linked (GlcNAc...) asparagine glycan is attached at asparagine 232. 2 disulfides stabilise this stretch: cysteine 272–cysteine 303 and cysteine 363–cysteine 377.

The protein belongs to the GDA1/CD39 NTPase family. In terms of assembly, monomer; active form. Homodimer; disulfide-linked. Homodimers are enzymatically inactive. Ca(2+) serves as cofactor. Requires Mg(2+) as cofactor. In terms of processing, N-glycosylated; high-mannose type. Expressed in fetal cells and most adult tissues.

It is found in the endoplasmic reticulum. Its subcellular location is the secreted. The catalysed reaction is a ribonucleoside 5'-diphosphate + H2O = a ribonucleoside 5'-phosphate + phosphate + H(+). The enzyme catalyses GDP + H2O = GMP + phosphate + H(+). It catalyses the reaction UDP + H2O = UMP + phosphate + H(+). It carries out the reaction IDP + H2O = IMP + phosphate + H(+). The catalysed reaction is CDP + H2O = CMP + phosphate + H(+). The enzyme catalyses ADP + H2O = AMP + phosphate + H(+). The protein operates within protein modification; protein glycosylation. Functionally, hydrolyzes nucleoside diphosphates with a preference for GDP, IDP and UDP compared to ADP and CDP. In the lumen of the endoplasmic reticulum, hydrolyzes UDP that acts as an end-product feedback inhibitor of the UDP-Glc:glycoprotein glucosyltransferases. UMP can be transported back by an UDP-sugar antiporter to the cytosol where it is consumed to regenerate UDP-glucose. Therefore, it positively regulates protein reglucosylation by clearing UDP from the ER lumen and by promoting the regeneration of UDP-glucose. Protein reglucosylation is essential to proper glycoprotein folding and quality control in the ER. This Mesocricetus auratus (Golden hamster) protein is Ectonucleoside triphosphate diphosphohydrolase 5 (ENTPD5).